The sequence spans 402 residues: Acetate kinase (402 aa).

N7 serves as a coordination point for Mg(2+). K14 provides a ligand contact to ATP. R95 contacts substrate. The active-site Proton donor/acceptor is the D152. ATP is bound by residues 212–216, 286–288, and 334–338; these read HLGNG, DMR, and GIGEN. E388 is a binding site for Mg(2+).

The protein belongs to the acetokinase family. In terms of assembly, homodimer. Mg(2+) is required as a cofactor. Mn(2+) serves as cofactor.

Its subcellular location is the cytoplasm. The catalysed reaction is acetate + ATP = acetyl phosphate + ADP. The protein operates within metabolic intermediate biosynthesis; acetyl-CoA biosynthesis; acetyl-CoA from acetate: step 1/2. Functionally, catalyzes the formation of acetyl phosphate from acetate and ATP. Can also catalyze the reverse reaction. The polypeptide is Acetate kinase (Nitratidesulfovibrio vulgaris (strain ATCC 29579 / DSM 644 / CCUG 34227 / NCIMB 8303 / VKM B-1760 / Hildenborough) (Desulfovibrio vulgaris)).